The sequence spans 350 residues: MYSLLRPALFCMDAERAHGAGLRALDLAYRSGTLGLLASRPAPLPTRAFGLEFPNPVGLAAGLDKNGEHIDALFALGFGYVEIGTVTPRPQAGNPQPRLFRVPEHLGVINRMGFNNAGVDALVANVRAARRDRGILGINIGKNKDTPNELAHTDYLTCLEKVYALADYITVNISSPNTAGLRELQEEQALRELVSRLREGQETLAARHGKRVPMLVKVAPDLSDADVDAAARVLAELQVDGVIATNTTIARVGMENHPLASEAGGLSGAPVMARSTAVLRRLRTRLPESIPLIGVGGICSGADAAAKMSAGATMVQLYSGLVYRGPALVGECVESIRRRREAPSSGVAHL.

FMN is bound by residues 61-65 (AGLDK) and threonine 85. Lysine 65 contributes to the substrate binding site. 110-114 (NRMGF) is a binding site for substrate. FMN contacts are provided by asparagine 139 and asparagine 172. Substrate is bound at residue asparagine 172. The Nucleophile role is filled by serine 175. Position 177 (asparagine 177) interacts with substrate. 2 residues coordinate FMN: lysine 217 and threonine 245. Substrate is bound at residue 246 to 247 (NT). Residues glycine 268, glycine 297, and 318–319 (YS) each bind FMN.

This sequence belongs to the dihydroorotate dehydrogenase family. Type 2 subfamily. In terms of assembly, monomer. FMN serves as cofactor.

It localises to the cell membrane. The enzyme catalyses (S)-dihydroorotate + a quinone = orotate + a quinol. It functions in the pathway pyrimidine metabolism; UMP biosynthesis via de novo pathway; orotate from (S)-dihydroorotate (quinone route): step 1/1. Functionally, catalyzes the conversion of dihydroorotate to orotate with quinone as electron acceptor. This Flavobacterium lutescens protein is Dihydroorotate dehydrogenase (quinone).